The sequence spans 261 residues: Cytochrome c oxidase subunit 3 (261 aa).

Over 1–15 (MAHQAHAYHMVDPSP) the chain is Mitochondrial matrix. The chain crosses the membrane as a helical span at residues 16-34 (WPLTGAIAALLLTSGTAVW). Topologically, residues 35 to 40 (FHFHSL) are mitochondrial intermembrane. Residues 41–66 (TLLTLGNILLLLTMYQWWRDIIREGT) form a helical membrane-spanning segment. Over 67–72 (FQGHHT) the chain is Mitochondrial matrix. Residues 73-105 (PPVQKGLRYGMILFITSEVFFFLGFFWAFYHAS) traverse the membrane as a helical segment. Residues 106–128 (LAPTPELGGCWPPAGITTLDPFE) lie on the Mitochondrial intermembrane side of the membrane. A helical transmembrane segment spans residues 129-152 (VPLLNTAVLLASGVTVTWAHHSIM). At 153-155 (EGE) the chain is on the mitochondrial matrix side. A helical transmembrane segment spans residues 156 to 183 (RKQTIQALTLTILLGFYFTFLQGMEYYE). The Mitochondrial intermembrane portion of the chain corresponds to 184-190 (APFTIAD). Residues 191 to 223 (GVYGSTFFVATGFHGLHVIIGSTFLAVCLLRQV) form a helical membrane-spanning segment. Residues 224–232 (QYHFTSEHH) lie on the Mitochondrial matrix side of the membrane. Residues 233–256 (FGFEAAAWYWHFVDVVWLFLYVSI) traverse the membrane as a helical segment. Residues 257–261 (YWWGS) are Mitochondrial intermembrane-facing.

This sequence belongs to the cytochrome c oxidase subunit 3 family. Component of the cytochrome c oxidase (complex IV, CIV), a multisubunit enzyme composed of 14 subunits. The complex is composed of a catalytic core of 3 subunits MT-CO1, MT-CO2 and MT-CO3, encoded in the mitochondrial DNA, and 11 supernumerary subunits COX4I, COX5A, COX5B, COX6A, COX6B, COX6C, COX7A, COX7B, COX7C, COX8 and NDUFA4, which are encoded in the nuclear genome. The complex exists as a monomer or a dimer and forms supercomplexes (SCs) in the inner mitochondrial membrane with NADH-ubiquinone oxidoreductase (complex I, CI) and ubiquinol-cytochrome c oxidoreductase (cytochrome b-c1 complex, complex III, CIII), resulting in different assemblies (supercomplex SCI(1)III(2)IV(1) and megacomplex MCI(2)III(2)IV(2)).

It localises to the mitochondrion inner membrane. It catalyses the reaction 4 Fe(II)-[cytochrome c] + O2 + 8 H(+)(in) = 4 Fe(III)-[cytochrome c] + 2 H2O + 4 H(+)(out). In terms of biological role, component of the cytochrome c oxidase, the last enzyme in the mitochondrial electron transport chain which drives oxidative phosphorylation. The respiratory chain contains 3 multisubunit complexes succinate dehydrogenase (complex II, CII), ubiquinol-cytochrome c oxidoreductase (cytochrome b-c1 complex, complex III, CIII) and cytochrome c oxidase (complex IV, CIV), that cooperate to transfer electrons derived from NADH and succinate to molecular oxygen, creating an electrochemical gradient over the inner membrane that drives transmembrane transport and the ATP synthase. Cytochrome c oxidase is the component of the respiratory chain that catalyzes the reduction of oxygen to water. Electrons originating from reduced cytochrome c in the intermembrane space (IMS) are transferred via the dinuclear copper A center (CU(A)) of subunit 2 and heme A of subunit 1 to the active site in subunit 1, a binuclear center (BNC) formed by heme A3 and copper B (CU(B)). The BNC reduces molecular oxygen to 2 water molecules using 4 electrons from cytochrome c in the IMS and 4 protons from the mitochondrial matrix. This Oncorhynchus mykiss (Rainbow trout) protein is Cytochrome c oxidase subunit 3 (mt-co3).